Here is a 93-residue protein sequence, read N- to C-terminus: Protein BOLA2 (93 aa).

C29 is subject to S-glutathionyl cysteine; transient; alternate. The disordered stretch occupies residues 72-93 (KAQTPQQWKPPSQDSATLTKDA).

Belongs to the bolA/yrbA family. As to quaternary structure, homodimer. Interacts in vitro with GRXS14, GRXS15, GRXS16 and GRXS17, but not with GRXC5. Interacts in vivo only with GRXS17. Can be either glutathionylated or forming covalent homodimers, depending on the oxidation state.

It localises to the cytoplasm. The protein localises to the nucleus. Its function is as follows. May act either alone or in interaction with glutaredoxin as a redox-regulated transcriptional regulator, or as a factor regulating Fe-S cluster biogenesis. The GRXS17-BOLA2 heterodimer binds a labile, oxygen sensitive iron-sulfur cluster. This is Protein BOLA2 from Arabidopsis thaliana (Mouse-ear cress).